Consider the following 626-residue polypeptide: Two-component response regulator ORR24 (626 aa).

The disordered stretch occupies residues 1–22 (MTVEERQGRVGGHGVSGGGGGR). The segment covering 9–22 (RVGGHGVSGGGGGR) has biased composition (gly residues). Residues 30 to 145 (RVLAVDDDPT…QLRTIWQHVI (116 aa)) enclose the Response regulatory domain. Position 81 is a 4-aspartylphosphate (D81). The segment covering 151-162 (DAKNRGNDDDAG) has biased composition (basic and acidic residues). Disordered stretches follow at residues 151–215 (DAKN…KKPR) and 400–440 (LQPL…RTTN). Over residues 191 to 202 (NGDDGDDSDENS) the composition is skewed to acidic residues. The segment at residues 210–269 (TQKKPRVVWSVELHRKFVAAVNQLGIEKAVPKKILDLMNVENITRENVASHLQKYRLYLK) is a DNA-binding region (myb-like GARP). Residues 400–421 (LQPLESSSQQHLSRVHSSSADP) are compositionally biased toward polar residues.

The protein belongs to the ARR family. Type-B subfamily. Two-component system major event consists of a His-to-Asp phosphorelay between a sensor histidine kinase (HK) and a response regulator (RR). In plants, the His-to-Asp phosphorelay involves an additional intermediate named Histidine-containing phosphotransfer protein (HPt). This multistep phosphorelay consists of a His-Asp-His-Asp sequential transfer of a phosphate group between first a His and an Asp of the HK protein, followed by the transfer to a conserved His of the HPt protein and finally the transfer to an Asp in the receiver domain of the RR protein.

It is found in the nucleus. In terms of biological role, transcriptional activator that binds specific DNA sequence. Functions as a response regulator involved in His-to-Asp phosphorelay signal transduction system. Phosphorylation of the Asp residue in the receiver domain activates the ability of the protein to promote the transcription of target genes. May directly activate some type-A response regulators in response to cytokinins. This is Two-component response regulator ORR24 from Oryza sativa subsp. indica (Rice).